The sequence spans 223 residues: Deoxyribose-phosphate aldolase (223 aa).

D91 functions as the Proton donor/acceptor in the catalytic mechanism. Catalysis depends on K153, which acts as the Schiff-base intermediate with acetaldehyde. The active-site Proton donor/acceptor is the K182.

This sequence belongs to the DeoC/FbaB aldolase family. DeoC type 1 subfamily.

It localises to the cytoplasm. The enzyme catalyses 2-deoxy-D-ribose 5-phosphate = D-glyceraldehyde 3-phosphate + acetaldehyde. It participates in carbohydrate degradation; 2-deoxy-D-ribose 1-phosphate degradation; D-glyceraldehyde 3-phosphate and acetaldehyde from 2-deoxy-alpha-D-ribose 1-phosphate: step 2/2. Catalyzes a reversible aldol reaction between acetaldehyde and D-glyceraldehyde 3-phosphate to generate 2-deoxy-D-ribose 5-phosphate. This Streptococcus pyogenes serotype M4 (strain MGAS10750) protein is Deoxyribose-phosphate aldolase.